The primary structure comprises 328 residues: GTP 3',8-cyclase (328 aa).

Residues 1–229 enclose the Radical SAM core domain; it reads MNQVDYLRIS…ESQVRGAGPA (229 aa). R8 contributes to the GTP binding site. 2 residues coordinate [4Fe-4S] cluster: C15 and C19. Y21 contributes to the S-adenosyl-L-methionine binding site. C22 serves as a coordination point for [4Fe-4S] cluster. R60 is a binding site for GTP. G64 is a binding site for S-adenosyl-L-methionine. A GTP-binding site is contributed by T91. S115 lines the S-adenosyl-L-methionine pocket. Residue K155 participates in GTP binding. M189 lines the S-adenosyl-L-methionine pocket. [4Fe-4S] cluster is bound by residues C252 and C255. GTP is bound at residue 257-259; that stretch reads RMR. A [4Fe-4S] cluster-binding site is contributed by C269.

This sequence belongs to the radical SAM superfamily. MoaA family. As to quaternary structure, monomer and homodimer. It depends on [4Fe-4S] cluster as a cofactor.

It carries out the reaction GTP + AH2 + S-adenosyl-L-methionine = (8S)-3',8-cyclo-7,8-dihydroguanosine 5'-triphosphate + 5'-deoxyadenosine + L-methionine + A + H(+). Its pathway is cofactor biosynthesis; molybdopterin biosynthesis. Catalyzes the cyclization of GTP to (8S)-3',8-cyclo-7,8-dihydroguanosine 5'-triphosphate. The sequence is that of GTP 3',8-cyclase from Nostoc punctiforme (strain ATCC 29133 / PCC 73102).